An 808-amino-acid polypeptide reads, in one-letter code: Spindle assembly abnormal protein 4 (808 aa).

Residues Met-1–Ser-151 are disordered. The span at Pro-42–Ser-54 shows a compositional bias: low complexity. Composition is skewed to polar residues over residues Ser-61–Ser-78 and Pro-85–Asn-104. A compositionally biased stretch (basic and acidic residues) spans Ala-113–Ala-123. Residues Glu-124–Glu-133 show a composition bias toward acidic residues. Residues Lys-161–Ser-181 adopt a coiled-coil conformation. Disordered stretches follow at residues Thr-187–Arg-206 and Val-271–Arg-298. A compositionally biased stretch (polar residues) spans Met-280 to Gln-294. Positions Leu-314–Phe-503 form a coiled coil. Residues Lys-511–Thr-529 are compositionally biased toward polar residues. The segment at Lys-511 to Asn-564 is disordered. Positions Ser-530–Ser-541 are enriched in low complexity. The span at Leu-542 to Ser-551 shows a compositional bias: polar residues.

As to quaternary structure, interacts with hyls-1; leading to hyls-1 localization into newly forming centrioles.

It is found in the cytoplasm. It localises to the cytoskeleton. Its subcellular location is the microtubule organizing center. The protein resides in the centrosome. Its function is as follows. Required for centrosome duplication. Plays a central role in determining centrosome size. The polypeptide is Spindle assembly abnormal protein 4 (sas-4) (Caenorhabditis elegans).